The following is a 261-amino-acid chain: Early 39 kDa protein (261 aa).

Positions Ser-215–Glu-261 are disordered. Residues Val-250–Glu-261 are compositionally biased toward polar residues.

In Orgyia pseudotsugata multicapsid polyhedrosis virus (OpMNPV), this protein is Early 39 kDa protein.